Reading from the N-terminus, the 213-residue chain is Imidazole glycerol phosphate synthase subunit HisH 2 (213 aa).

The Glutamine amidotransferase type-1 domain occupies 4-211; the sequence is RLGLIDYGMG…LNWLETGAKP (208 aa). Residue Cys-82 is the Nucleophile of the active site. Catalysis depends on residues His-186 and Glu-188.

As to quaternary structure, heterodimer of HisH and HisF.

It is found in the cytoplasm. The enzyme catalyses 5-[(5-phospho-1-deoxy-D-ribulos-1-ylimino)methylamino]-1-(5-phospho-beta-D-ribosyl)imidazole-4-carboxamide + L-glutamine = D-erythro-1-(imidazol-4-yl)glycerol 3-phosphate + 5-amino-1-(5-phospho-beta-D-ribosyl)imidazole-4-carboxamide + L-glutamate + H(+). It carries out the reaction L-glutamine + H2O = L-glutamate + NH4(+). It participates in amino-acid biosynthesis; L-histidine biosynthesis; L-histidine from 5-phospho-alpha-D-ribose 1-diphosphate: step 5/9. Functionally, IGPS catalyzes the conversion of PRFAR and glutamine to IGP, AICAR and glutamate. The HisH subunit provides the glutamine amidotransferase activity that produces the ammonia necessary to HisF for the synthesis of IGP and AICAR. This chain is Imidazole glycerol phosphate synthase subunit HisH 2 (hisH2), found in Prochlorococcus marinus (strain MIT 9313).